An 829-amino-acid polypeptide reads, in one-letter code: Periplasmic nitrate reductase (829 aa).

The tat-type signal signal peptide spans 1 to 30; the sequence is MKMTRRAFVKANAAASAAAVAGITLPASAA. Residues 41–97 enclose the 4Fe-4S Mo/W bis-MGD-type domain; sequence ITWDKAPCRFCGTGCSVLVGTQNGKVVATQGDPEAPVNKGLNCIKGYFLSKIMYGQD. Residues Cys48, Cys51, Cys55, and Cys83 each coordinate [4Fe-4S] cluster. Residues Lys85, Gln152, Asn177, Cys181, 214–221, 245–249, 264–266, Met374, Gln378, Asn484, 510–511, Lys533, Asp560, and 718–727 contribute to the Mo-bis(molybdopterin guanine dinucleotide) site; these read WGSNMAEM, STYYH, QSD, SD, and TGRVLEHWHT. A substrate-binding site is contributed by Phe794. Residues Asn802 and Lys819 each contribute to the Mo-bis(molybdopterin guanine dinucleotide) site.

This sequence belongs to the prokaryotic molybdopterin-containing oxidoreductase family. NasA/NapA/NarB subfamily. As to quaternary structure, component of the periplasmic nitrate reductase NapAB complex composed of NapA and NapB. [4Fe-4S] cluster serves as cofactor. Mo-bis(molybdopterin guanine dinucleotide) is required as a cofactor. Predicted to be exported by the Tat system. The position of the signal peptide cleavage has not been experimentally proven.

The protein resides in the periplasm. The enzyme catalyses 2 Fe(II)-[cytochrome] + nitrate + 2 H(+) = 2 Fe(III)-[cytochrome] + nitrite + H2O. In terms of biological role, catalytic subunit of the periplasmic nitrate reductase complex NapAB. Receives electrons from NapB and catalyzes the reduction of nitrate to nitrite. The chain is Periplasmic nitrate reductase from Vibrio vulnificus (strain CMCP6).